We begin with the raw amino-acid sequence, 305 residues long: uncharacterized protein (305 aa).

Residues S208–D236 form a disordered region. Basic residues predominate over residues V215–G225.

This is an uncharacterized protein from Bacillus subtilis (strain 168).